Consider the following 78-residue polypeptide: Large ribosomal subunit protein bL28 (78 aa).

This sequence belongs to the bacterial ribosomal protein bL28 family.

The polypeptide is Large ribosomal subunit protein bL28 (Parasynechococcus marenigrum (strain WH8102)).